Consider the following 112-residue polypeptide: Putative pterin-4-alpha-carbinolamine dehydratase (112 aa).

The protein belongs to the pterin-4-alpha-carbinolamine dehydratase family.

The enzyme catalyses (4aS,6R)-4a-hydroxy-L-erythro-5,6,7,8-tetrahydrobiopterin = (6R)-L-erythro-6,7-dihydrobiopterin + H2O. The protein is Putative pterin-4-alpha-carbinolamine dehydratase of Shewanella piezotolerans (strain WP3 / JCM 13877).